Consider the following 204-residue polypeptide: Vacuolar protein-sorting-associated protein 46 (204 aa).

Residues 1-103 (MSRNSAAGLE…ASMGQVCKGM (103 aa)) are interaction with VSP24. S5 is subject to Phosphoserine. Coiled coils occupy residues 9 to 56 (LENT…RIYA) and 109 to 129 (NMNLQQITMIMDKFEQQFEDL). The tract at residues 104–204 (DKALQNMNLQ…LAQRLRALRG (101 aa)) is interaction with VSP4. The tract at residues 176 to 204 (NVPEIKAKEVNVDDEKEDKLAQRLRALRG) is interaction with VTA1. Over residues 185–196 (VNVDDEKEDKLA) the composition is skewed to basic and acidic residues. Residues 185 to 204 (VNVDDEKEDKLAQRLRALRG) are disordered.

It belongs to the SNF7 family. In terms of assembly, self-associates. Interacts with VPS4 and VTA1. Interacts with IST1.

The protein resides in the endosome membrane. It is found in the endomembrane system. Functionally, class E VPS protein implicated in concentration and sorting of cargo proteins of the multivesicular body (MVB) for incorporation into intralumenal vesicles. The lumenal sequestrated membrane proteins will be targeted into the vacuole after fusion of the endosome with the vacuole. Probably acts as a peripherally associated component of the ESCRT-III complex, which appears to be critical for late steps in MVB sorting, such as membrane invagination and final cargo sorting and recruits late-acting components of the sorting machinery. The MVB pathway requires the sequential function of ESCRT-O, -I,-II and -III complex assemblies. Regulates the membrane association of VPS4. Can stimulate VPS4 ATPase activity directly or via VTA1. The sequence is that of Vacuolar protein-sorting-associated protein 46 (DID2) from Saccharomyces cerevisiae (strain ATCC 204508 / S288c) (Baker's yeast).